The primary structure comprises 597 residues: Probable bifunctional ADP-ribose hydrolase/ADP-ribosyltransferase (597 aa).

The region spanning 99–299 (SRLIKHGDLG…FYSKLLGPSH (201 aa)) is the Macro domain. ADP-D-ribose contacts are provided by Asp118, Ile119, and Asn133. Positions 139, 144, and 146 each coordinate Zn(2+). 7 residues coordinate ADP-D-ribose: Cys146, Ile147, Asp148, Ser244, Thr245, Gly246, and Phe248. The region spanning 307-597 (ENTPQGSLSL…IGRAIPLLLE (291 aa)) is the Deacetylase sirtuin-type domain. Residues Ala333, 418–421 (SNAD), and Gln438 contribute to the NAD(+) site. Zn(2+)-binding residues include Cys446, Cys450, Cys485, and Cys488. Val584 is a binding site for NAD(+).

It in the N-terminal section; belongs to the MacroD-type family. Zn-Macro subfamily. This sequence in the C-terminal section; belongs to the sirtuin family. Class M subfamily. Monomer. Requires Zn(2+) as cofactor.

The enzyme catalyses 5-O-(ADP-D-ribosyl)-L-glutamyl-[protein] + H2O = L-glutamyl-[protein] + ADP-D-ribose + H(+). Is probably a bifunctional enzyme with ADP-ribosyltransferase and ADP-ribosylhydrolase activities. In vitro, can act as an ADP-ribosylhydrolase that hydrolyzes ADP-ribosyl-glutamate bonds. It can remove the ADP-ribosyl modification from the human mono-ADP-ribosylated PARP1 E988Q mutant, which is primarily modified on glutamate site with only minor aspartate contribution. It cannot hydrolyze the ADP-ribosyl-arpartate bond in ribosylated S.pyogenes GcvH-L. The protein is Probable bifunctional ADP-ribose hydrolase/ADP-ribosyltransferase of Fusarium oxysporum f. sp. cubense.